Here is a 132-residue protein sequence, read N- to C-terminus: Fatty acid-binding protein type 3 (132 aa).

It belongs to the calycin superfamily. Fatty-acid binding protein (FABP) family.

This Fasciola hepatica (Liver fluke) protein is Fatty acid-binding protein type 3.